A 485-amino-acid chain; its full sequence is Glycogen synthase (485 aa).

Lys-21 contacts ADP-alpha-D-glucose.

This sequence belongs to the glycosyltransferase 1 family. Bacterial/plant glycogen synthase subfamily.

It catalyses the reaction [(1-&gt;4)-alpha-D-glucosyl](n) + ADP-alpha-D-glucose = [(1-&gt;4)-alpha-D-glucosyl](n+1) + ADP + H(+). The protein operates within glycan biosynthesis; glycogen biosynthesis. Synthesizes alpha-1,4-glucan chains using ADP-glucose. The protein is Glycogen synthase of Pseudomonas savastanoi pv. phaseolicola (strain 1448A / Race 6) (Pseudomonas syringae pv. phaseolicola (strain 1448A / Race 6)).